Reading from the N-terminus, the 424-residue chain is Serine--tRNA ligase (424 aa).

Position 230-232 (threonine 230–glutamate 232) interacts with L-serine. Residue arginine 261–glutamate 263 participates in ATP binding. Residue glutamate 284 coordinates L-serine. Glutamate 348–serine 351 contacts ATP. Residue serine 384 participates in L-serine binding.

The protein belongs to the class-II aminoacyl-tRNA synthetase family. Type-1 seryl-tRNA synthetase subfamily. As to quaternary structure, homodimer. The tRNA molecule binds across the dimer.

It is found in the cytoplasm. The catalysed reaction is tRNA(Ser) + L-serine + ATP = L-seryl-tRNA(Ser) + AMP + diphosphate + H(+). The enzyme catalyses tRNA(Sec) + L-serine + ATP = L-seryl-tRNA(Sec) + AMP + diphosphate + H(+). It functions in the pathway aminoacyl-tRNA biosynthesis; selenocysteinyl-tRNA(Sec) biosynthesis; L-seryl-tRNA(Sec) from L-serine and tRNA(Sec): step 1/1. Its function is as follows. Catalyzes the attachment of serine to tRNA(Ser). Is also able to aminoacylate tRNA(Sec) with serine, to form the misacylated tRNA L-seryl-tRNA(Sec), which will be further converted into selenocysteinyl-tRNA(Sec). In Streptococcus pneumoniae (strain 70585), this protein is Serine--tRNA ligase.